Here is a 446-residue protein sequence, read N- to C-terminus: O-antigen polymerase (446 aa).

Helical transmembrane passes span 11–31 (ICSYTFFMVNLFILILSVINE), 33–53 (FCEIAYVIISVSSVLFCVIII), 58–78 (QGGFLNPMTFCIISVFFFILI), 104–124 (IYVFYSLAVVNIPLAFTVLLY), 147–167 (QLSMILLWGGLFSAIFLIKSY), 186–206 (LYDELFWFTLSKYCYILSLLF), 211–231 (NFILYSLLIFITSIGYILVGL), 252–272 (LKIKWLLLVAILVTTISSLFL), 355–375 (IYLGWIIGSVALLLFAFSLAF), 391–411 (KLAYTYRLIIFLALPNLIYFA), and 415–435 (LFDFITKVLFIALFIGGLSIV).

The protein localises to the cell inner membrane. It catalyses the reaction n lipid-linked O-antigen repeat units = a lipid-linked O antigen + (n-1) polyisoprenyl diphosphate.. It participates in bacterial outer membrane biogenesis; LPS O-antigen biosynthesis. Functionally, polymerase involved in the biosynthesis of the lipopolysaccharide (LPS). Catalyzes the polymerization of the O-antigen repeat units on the periplasmic face of the inner membrane, leading to the formation of the lipid-linked O-antigen molecule. In vitro, shows a preference for bacteria-based, undecaprenyl-containing substrates rather than eukaryote-based, dolichol-containing substrates. The chain is O-antigen polymerase from Escherichia coli.